A 442-amino-acid chain; its full sequence is Protein bangles and beads (442 aa).

The disordered stretch occupies residues 47 to 442 (AVEPAPLKPE…SEESSESKEN (396 aa)). Basic and acidic residues-rich tracts occupy residues 55-67 (PEAEKPAETKTIE), 114-125 (PEKKTLPEEAKP), and 133-146 (EAEKKQEKTARTEA). The span at 159–172 (AIEQAPEAPAANAE) shows a compositional bias: low complexity. Basic and acidic residues-rich tracts occupy residues 177–194 (VVDEVKPQEPKIDAKSAE) and 204–240 (AEKETPVPEQPARQERINEIEQKDAKKDAAVAEEPAK). Composition is skewed to low complexity over residues 241–255 (AAEATPTAAPEAATK) and 272–288 (SSPAAAAASPAAQAAQA). The segment covering 329–339 (EAVKEQEKEQP) has biased composition (basic and acidic residues). Positions 357–376 (TAAPAGAPEPTAAVAPAAVP) are enriched in low complexity. A compositionally biased stretch (basic and acidic residues) spans 408 to 442 (EPKKSSEEKSDKSESKVDESSESKESEESSESKEN). A phosphoserine mark is found at Ser430, Ser433, Ser436, and Ser437.

In terms of tissue distribution, expressed in the embryonic CNS, in sets of cells that are segmentally reiterated along the periphery of the nervous system.

Functionally, may play an important role during development. In Drosophila melanogaster (Fruit fly), this protein is Protein bangles and beads (bnb).